A 151-amino-acid polypeptide reads, in one-letter code: UPF0756 membrane protein Lreu_0946 (151 aa).

4 consecutive transmembrane segments (helical) span residues 4–24 (WLFL…SLII), 52–72 (WGVT…QIGF), 77–97 (AAFK…VAIL), and 115–135 (LVLG…GPVI).

It belongs to the UPF0756 family.

Its subcellular location is the cell membrane. The sequence is that of UPF0756 membrane protein Lreu_0946 from Limosilactobacillus reuteri (strain DSM 20016) (Lactobacillus reuteri).